Consider the following 459-residue polypeptide: Argininosuccinate lyase (459 aa).

It belongs to the lyase 1 family. Argininosuccinate lyase subfamily.

It is found in the cytoplasm. It catalyses the reaction 2-(N(omega)-L-arginino)succinate = fumarate + L-arginine. The protein operates within amino-acid biosynthesis; L-arginine biosynthesis; L-arginine from L-ornithine and carbamoyl phosphate: step 3/3. The polypeptide is Argininosuccinate lyase (Lactococcus lactis subsp. lactis (strain IL1403) (Streptococcus lactis)).